We begin with the raw amino-acid sequence, 74 residues long: Conotoxin AbVIH (74 aa).

The first 17 residues, 1–17 (VLIIAVLFLTACQLTTA), serve as a signal peptide directing secretion. Positions 18–40 (ETSSRGKQKHRALRSTDKDSRMT) are excised as a propeptide. The tract at residues 19 to 40 (TSSRGKQKHRALRSTDKDSRMT) is disordered. 3 cysteine pairs are disulfide-bonded: C43-C57, C50-C61, and C56-C68.

Belongs to the conotoxin O1 superfamily. As to expression, expressed by the venom duct.

The protein localises to the secreted. This Conus abbreviatus (Abbreviated cone) protein is Conotoxin AbVIH.